The chain runs to 621 residues: Phosphatidylinositol-3,5-bisphosphate 3-phosphatase MTMR6 (621 aa).

The GRAM domain maps to 1 to 101; the sequence is MEHIRTTKVE…YNSLLQLSKQ (101 aa). The interval 2-141 is interaction with RAB1B; sequence EHIRTTKVEQ…EEYKRMGVPN (140 aa). Tyrosine 108 carries the phosphotyrosine modification. The Myotubularin phosphatase domain maps to 124 to 499; sequence GWQLIDLAEE…FNFKFWRNMY (376 aa). A 1,2-diacyl-sn-glycero-3-phospho-(1D-myo-inositol-3,5-bisphosphate) contacts are provided by asparagine 248, asparagine 273, and isoleucine 274. Positions 248, 273, and 274 each coordinate a 1,2-diacyl-sn-glycero-3-phospho-(1D-myo-inositol-3-phosphate). Cysteine 336 serves as the catalytic Phosphocysteine intermediate. 8 residues coordinate a 1,2-diacyl-sn-glycero-3-phospho-(1D-myo-inositol-3,5-bisphosphate): serine 337, aspartate 338, glycine 339, tryptophan 340, aspartate 341, arginine 342, lysine 378, and arginine 382. Residues serine 337, aspartate 338, glycine 339, tryptophan 340, aspartate 341, and arginine 342 each coordinate a 1,2-diacyl-sn-glycero-3-phospho-(1D-myo-inositol-3-phosphate). Arginine 382 contacts a 1,2-diacyl-sn-glycero-3-phospho-(1D-myo-inositol-3-phosphate). Phosphoserine is present on residues serine 556, serine 561, serine 589, and serine 611.

This sequence belongs to the protein-tyrosine phosphatase family. Non-receptor class myotubularin subfamily. In terms of assembly, homodimer. Heterodimer (via C-terminus) with MTMR9 (via C-terminus). Interacts with ALKBH4. Interacts with KCNN4. Interacts (via GRAM domain) with RAB1B (in GDP-bound form); the interaction regulates MTMR6 recruitment to the endoplasmic reticulum-Golgi intermediate compartment. In terms of tissue distribution, expressed in CD4+ T-cells.

The protein resides in the cytoplasm. Its subcellular location is the endoplasmic reticulum-Golgi intermediate compartment. The protein localises to the endoplasmic reticulum. It localises to the cell projection. It is found in the ruffle membrane. The protein resides in the perinuclear region. It carries out the reaction a 1,2-diacyl-sn-glycero-3-phospho-(1D-myo-inositol-3,5-bisphosphate) + H2O = a 1,2-diacyl-sn-glycero-3-phospho-(1D-myo-inositol-5-phosphate) + phosphate. The enzyme catalyses a 1,2-diacyl-sn-glycero-3-phospho-(1D-myo-inositol-3-phosphate) + H2O = a 1,2-diacyl-sn-glycero-3-phospho-(1D-myo-inositol) + phosphate. It catalyses the reaction 1,2-dioctanoyl-sn-glycero-3-phospho-(1D-myo-inositol-3,5-bisphosphate) + H2O = 1,2-dioctanoyl-sn-glycero-3-phospho-(1D-myo-inositol-5-phosphate) + phosphate. The catalysed reaction is 1,2-dioctanoyl-sn-glycero-3-phospho-(1-D-myo-inositol-3-phosphate) + H2O = 1,2-dioctanoyl-sn-glycero-3-phospho-(1D-myo-inositol) + phosphate. Allosterically activated by phosphatidylserine and/or phosphatidylinositol 4-phosphate (PtdIns(4)P), and phosphatidylinositol 5-phosphate (PtdIns(5)P). Interaction with MTMR9 increases catalytic activity towards phosphatidylinositol 3,5-bisphosphate. Lipid phosphatase that specifically dephosphorylates the D-3 position of phosphatidylinositol 3-phosphate and phosphatidylinositol 3,5-bisphosphate, generating phosphatidylinositol and phosphatidylinositol 5-phosphate. Binds with high affinity to phosphatidylinositol 3,5-bisphosphate (PtdIns(3,5)P2) but also to phosphatidylinositol 3-phosphate (PtdIns(3)P), phosphatidylinositol 4-phosphate (PtdIns(4)P), and phosphatidylinositol 5-phosphate (PtdIns(5)P), phosphatidic acid and phosphatidylserine. Negatively regulates ER-Golgi protein transport. Probably in association with MTMR9, plays a role in the late stages of macropinocytosis by dephosphorylating phosphatidylinositol 3-phosphate in membrane ruffles. Acts as a negative regulator of KCNN4/KCa3.1 channel activity in CD4(+) T-cells possibly by decreasing intracellular levels of phosphatidylinositol 3-phosphate. Negatively regulates proliferation of reactivated CD4(+) T-cells. In complex with MTMR9, negatively regulates DNA damage-induced apoptosis. The formation of the MTMR6-MTMR9 complex stabilizes both MTMR6 and MTMR9 protein levels. The polypeptide is Phosphatidylinositol-3,5-bisphosphate 3-phosphatase MTMR6 (Homo sapiens (Human)).